An 87-amino-acid polypeptide reads, in one-letter code: Large ribosomal subunit protein bL27 (87 aa).

The disordered stretch occupies residues 1 to 21 (MAHKKGQGSTQNNRDSAGRRL).

This sequence belongs to the bacterial ribosomal protein bL27 family.

In Nautilia profundicola (strain ATCC BAA-1463 / DSM 18972 / AmH), this protein is Large ribosomal subunit protein bL27.